The sequence spans 728 residues: Methylmalonyl-CoA mutase large subunit (728 aa).

(R)-methylmalonyl-CoA-binding residues include Tyr-75, Met-78, Arg-82, Thr-85, Arg-87, Tyr-89, and Ser-114. Cob(II)alamin-binding residues include Phe-117 and Ala-139. Thr-195 and Gln-197 together coordinate (R)-methylmalonyl-CoA. Cob(II)alamin-binding residues include Val-206 and Arg-207. 4 residues coordinate (R)-methylmalonyl-CoA: Arg-207, His-244, Arg-283, and Ser-285. Cob(II)alamin-binding residues include Gly-333, Glu-370, Ala-373, Gly-609, His-610, Asp-611, Arg-612, Ser-655, Leu-657, Gly-686, and Thr-709. Residues 597–728 (RPRILLAKMG…VKKLRASLDA (132 aa)) form the B12-binding domain.

This sequence belongs to the methylmalonyl-CoA mutase family. As to quaternary structure, heterodimer of an alpha and a beta chain. Requires adenosylcob(III)alamin as cofactor.

The enzyme catalyses (R)-methylmalonyl-CoA = succinyl-CoA. Its function is as follows. Catalyzes the reversible conversion of succinyl-CoA to (R)-methylmalonyl-CoA through a radical mechanism. Is involved in the fermentation of pyruvate to propanoate that occurs in Propionibacteria. The polypeptide is Methylmalonyl-CoA mutase large subunit (mutB) (Propionibacterium freudenreichii subsp. shermanii).